Reading from the N-terminus, the 234-residue chain is Protein rgg8 (234 aa).

Its subcellular location is the cytoplasm. The protein resides in the nucleus. In Schizosaccharomyces pombe (strain 972 / ATCC 24843) (Fission yeast), this protein is Protein rgg8 (rgg8).